The chain runs to 74 residues: UPF0154 protein LVIS_1358 (74 aa).

Residues 4 to 24 (WIWILIVIVVGLACAAGGFYG) form a helical membrane-spanning segment.

This sequence belongs to the UPF0154 family.

It is found in the cell membrane. The sequence is that of UPF0154 protein LVIS_1358 from Levilactobacillus brevis (strain ATCC 367 / BCRC 12310 / CIP 105137 / JCM 1170 / LMG 11437 / NCIMB 947 / NCTC 947) (Lactobacillus brevis).